The chain runs to 196 residues: ATP-dependent Clp protease proteolytic subunit (196 aa).

Ser-98 acts as the Nucleophile in catalysis. His-123 is a catalytic residue.

The protein belongs to the peptidase S14 family. Fourteen ClpP subunits assemble into 2 heptameric rings which stack back to back to give a disk-like structure with a central cavity, resembling the structure of eukaryotic proteasomes.

Its subcellular location is the cytoplasm. It catalyses the reaction Hydrolysis of proteins to small peptides in the presence of ATP and magnesium. alpha-casein is the usual test substrate. In the absence of ATP, only oligopeptides shorter than five residues are hydrolyzed (such as succinyl-Leu-Tyr-|-NHMec, and Leu-Tyr-Leu-|-Tyr-Trp, in which cleavage of the -Tyr-|-Leu- and -Tyr-|-Trp bonds also occurs).. In terms of biological role, cleaves peptides in various proteins in a process that requires ATP hydrolysis. Has a chymotrypsin-like activity. Plays a major role in the degradation of misfolded proteins. The polypeptide is ATP-dependent Clp protease proteolytic subunit (Geobacillus thermodenitrificans (strain NG80-2)).